Reading from the N-terminus, the 327-residue chain is Putative HTH-type transcriptional regulatory protein Mbar_A2318 (327 aa).

The 59-residue stretch at 132 to 190 (LKKARMGQSMSLGTLASMVGVSRRTISKYEEEGMDASIDVVLQLEDIFGVELAKPINIL) folds into the HTH cro/C1-type domain. A DNA-binding region (H-T-H motif) is located at residues 143 to 162 (LGTLASMVGVSRRTISKYEE).

In Methanosarcina barkeri (strain Fusaro / DSM 804), this protein is Putative HTH-type transcriptional regulatory protein Mbar_A2318.